Here is an 85-residue protein sequence, read N- to C-terminus: Beta-insect depressant toxin BmKITb (85 aa).

An N-terminal signal peptide occupies residues methionine 1–alanine 21. The region spanning aspartate 22–glycine 82 is the LCN-type CS-alpha/beta domain. 4 disulfide bridges follow: cysteine 31-cysteine 81, cysteine 35-cysteine 56, cysteine 42-cysteine 63, and cysteine 46-cysteine 65. Glycine 82 bears the Glycine amide mark.

In terms of tissue distribution, expressed by the venom gland.

The protein localises to the secreted. In terms of biological role, depressant insect beta-toxins cause a transient contraction paralysis followed by a slow flaccid paralysis. They bind voltage-independently at site-4 of sodium channels (Nav) and shift the voltage of activation toward more negative potentials thereby affecting sodium channel activation and promoting spontaneous and repetitive firing. However, this toxin has some characteristics of excitatory toxins such as bursts of activity after the membrane has been hyperpolarized. This toxin is active only on insects. In Olivierus martensii (Manchurian scorpion), this protein is Beta-insect depressant toxin BmKITb.